The sequence spans 185 residues: Dihydrofolate reductase 1 (185 aa).

The DHFR domain maps to 8–185 (ELVLVVAADE…QASPRPLDDL (178 aa)).

This sequence belongs to the dihydrofolate reductase family.

It catalyses the reaction (6S)-5,6,7,8-tetrahydrofolate + NADP(+) = 7,8-dihydrofolate + NADPH + H(+). It functions in the pathway cofactor biosynthesis; tetrahydrofolate biosynthesis; 5,6,7,8-tetrahydrofolate from 7,8-dihydrofolate: step 1/1. In terms of biological role, key enzyme in folate metabolism. Catalyzes an essential reaction for de novo glycine and purine synthesis, and for DNA precursor synthesis. The chain is Dihydrofolate reductase 1 (folA1) from Haloarcula marismortui (strain ATCC 43049 / DSM 3752 / JCM 8966 / VKM B-1809) (Halobacterium marismortui).